The chain runs to 207 residues: Large ribosomal subunit protein uL4 (207 aa).

The interval 49 to 78 (HAVKNRSAVSGGGRKPWRQKGTGRARQGSI) is disordered.

The protein belongs to the universal ribosomal protein uL4 family. In terms of assembly, part of the 50S ribosomal subunit.

Its function is as follows. One of the primary rRNA binding proteins, this protein initially binds near the 5'-end of the 23S rRNA. It is important during the early stages of 50S assembly. It makes multiple contacts with different domains of the 23S rRNA in the assembled 50S subunit and ribosome. Forms part of the polypeptide exit tunnel. The polypeptide is Large ribosomal subunit protein uL4 (Streptococcus agalactiae serotype Ia (strain ATCC 27591 / A909 / CDC SS700)).